A 1096-amino-acid polypeptide reads, in one-letter code: Adenylate-forming reductase Nps9 (1096 aa).

The tract at residues 39 to 352 (DDTLTEISFL…TTEFGAPTQL (314 aa)) is adenylation (A) domain. Residues His236, 339-340 (VQ), Thr344, and 425-428 (IIGR) contribute to the AMP site. The region spanning 569 to 656 (EWTVSTLEHW…LLADRVAKIA (88 aa)) is the Carrier domain. Ser605 is modified (O-(pantetheine 4'-phosphoryl)serine). Residues 716–952 (LTGSTGGLGS…MPAEKVSAAI (237 aa)) form a reductase (R) domain region. Residues 720-723 (TGGL), 807-809 (SAW), Tyr880, and Lys884 each bind NADP(+).

The protein belongs to the adenylate-forming reductase family.

Its function is as follows. Adenylate-forming reductase, a natural product biosynthesis enzyme that resembles non-ribosomal peptide synthetases, yet serves to modify one substrate, rather than to condense two or more building blocks. The A-domain preferentially accepts L-threonine as substrate. The natural product of the enzyme is not yet known. This Serpula lacrymans var. lacrymans (strain S7.9) (Dry rot fungus) protein is Adenylate-forming reductase Nps9.